Here is a 123-residue protein sequence, read N- to C-terminus: Nitrogen fixation nifHD1 region GlnB-like protein 2 (123 aa).

It belongs to the P(II) protein family.

Could be involved in the regulation of nitrogen fixation. The sequence is that of Nitrogen fixation nifHD1 region GlnB-like protein 2 (glnBB) from Methanosarcina barkeri.